The sequence spans 152 residues: Cytochrome c-type biogenesis protein CcmE (152 aa).

Topologically, residues 1 to 8 are cytoplasmic; the sequence is MQARRKTR. The helical; Signal-anchor for type II membrane protein transmembrane segment at 9–29 threads the bilayer; the sequence is LYIVLAVLAGLGLTVSLTLYA. Residues 30–152 are Periplasmic-facing; that stretch reads LSSNIDLFYT…MTPEKTGAQP (123 aa). His-130 and Tyr-134 together coordinate heme. Positions 133–152 are disordered; the sequence is NYTPPEVKNAMTPEKTGAQP.

The protein belongs to the CcmE/CycJ family.

The protein resides in the cell inner membrane. In terms of biological role, heme chaperone required for the biogenesis of c-type cytochromes. Transiently binds heme delivered by CcmC and transfers the heme to apo-cytochromes in a process facilitated by CcmF and CcmH. The sequence is that of Cytochrome c-type biogenesis protein CcmE from Klebsiella pneumoniae (strain 342).